Here is a 330-residue protein sequence, read N- to C-terminus: D-lactate dehydrogenase (330 aa).

NAD(+)-binding positions include 156–157, Asp176, 206–207, 233–235, and Asp259; these read RI, VP, and AAR. Arg235 is a catalytic residue. Glu264 is a catalytic residue. Residue His296 is the Proton donor of the active site.

Belongs to the D-isomer specific 2-hydroxyacid dehydrogenase family.

It carries out the reaction (R)-lactate + NAD(+) = pyruvate + NADH + H(+). The sequence is that of D-lactate dehydrogenase (ldhD) from Staphylococcus epidermidis (strain ATCC 35984 / DSM 28319 / BCRC 17069 / CCUG 31568 / BM 3577 / RP62A).